Reading from the N-terminus, the 230-residue chain is Large ribosomal subunit protein uL1 (230 aa).

This sequence belongs to the universal ribosomal protein uL1 family. As to quaternary structure, part of the 50S ribosomal subunit.

Its function is as follows. Binds directly to 23S rRNA. The L1 stalk is quite mobile in the ribosome, and is involved in E site tRNA release. Protein L1 is also a translational repressor protein, it controls the translation of the L11 operon by binding to its mRNA. The sequence is that of Large ribosomal subunit protein uL1 from Desulforapulum autotrophicum (strain ATCC 43914 / DSM 3382 / VKM B-1955 / HRM2) (Desulfobacterium autotrophicum).